A 144-amino-acid chain; its full sequence is Eukaryotic translation initiation factor 1A (144 aa).

A compositionally biased stretch (basic residues) spans 1–15 (MPKNKGKGGKNRKRG). Disordered stretches follow at residues 1–25 (MPKNKGKGGKNRKRGKNEADDDKRE) and 120–144 (DVDGPEEGEGDSDYIQFEDEDIDKI). Residues 16–25 (KNEADDDKRE) are compositionally biased toward basic and acidic residues. The S1-like domain occupies 22–96 (DKRELVFKED…DKADVILKYM (75 aa)).

It belongs to the eIF-1A family.

In terms of biological role, seems to be required for maximal rate of protein biosynthesis. Enhances ribosome dissociation into subunits and stabilizes the binding of the initiator Met-tRNA(I) to 40 S ribosomal subunits. The sequence is that of Eukaryotic translation initiation factor 1A from Triticum aestivum (Wheat).